The primary structure comprises 350 residues: Hydroxymethylglutaryl-CoA synthase (350 aa).

A (3S)-3-hydroxy-3-methylglutaryl-CoA-binding site is contributed by Asp30. Glu82 (proton donor/acceptor) is an active-site residue. (3S)-3-hydroxy-3-methylglutaryl-CoA is bound by residues Cys114, Ser155, Thr203, and His236. The active-site Acyl-thioester intermediate is Cys114. Residue His236 is the Proton donor/acceptor of the active site. Position 241 (Arg241) interacts with CoA. Residues Arg245, Asn268, and Ser298 each coordinate (3S)-3-hydroxy-3-methylglutaryl-CoA.

Belongs to the thiolase-like superfamily. Archaeal HMG-CoA synthase family. As to quaternary structure, interacts with acetoacetyl-CoA thiolase that catalyzes the precedent step in the pathway and with a DUF35 protein. The acetoacetyl-CoA thiolase/HMG-CoA synthase complex channels the intermediate via a fused CoA-binding site, which allows for efficient coupling of the endergonic thiolase reaction with the exergonic HMGCS reaction.

The enzyme catalyses acetoacetyl-CoA + acetyl-CoA + H2O = (3S)-3-hydroxy-3-methylglutaryl-CoA + CoA + H(+). The protein operates within metabolic intermediate biosynthesis; (R)-mevalonate biosynthesis; (R)-mevalonate from acetyl-CoA: step 2/3. Functionally, catalyzes the condensation of acetyl-CoA with acetoacetyl-CoA to form 3-hydroxy-3-methylglutaryl-CoA (HMG-CoA). Functions in the mevalonate (MVA) pathway leading to isopentenyl diphosphate (IPP), a key precursor for the biosynthesis of isoprenoid compounds that are building blocks of archaeal membrane lipids. The polypeptide is Hydroxymethylglutaryl-CoA synthase (Pyrobaculum aerophilum (strain ATCC 51768 / DSM 7523 / JCM 9630 / CIP 104966 / NBRC 100827 / IM2)).